Reading from the N-terminus, the 110-residue chain is MLDELKCEACSIDAIALTTQQQQELLLELEGWHLMEREGIPQLEKVYKFKNFMQAWQFSNQVAELAEQEFHHPSILLEWGKVTVTWWSHSIKGLHKNDFICAAKCDQIIR.

Belongs to the pterin-4-alpha-carbinolamine dehydratase family.

The enzyme catalyses (4aS,6R)-4a-hydroxy-L-erythro-5,6,7,8-tetrahydrobiopterin = (6R)-L-erythro-6,7-dihydrobiopterin + H2O. The chain is Putative pterin-4-alpha-carbinolamine dehydratase from Vibrio vulnificus (strain CMCP6).